Consider the following 333-residue polypeptide: T-cell surface glycoprotein CD1b-1 (333 aa).

The first 18 residues, 1–18, serve as a signal peptide directing secretion; sequence MLLLPLLLLAVIVPGGDN. Topologically, residues 19-302 are extracellular; it reads EDVFQGPTSF…LYWGHPTSTG (284 aa). N-linked (GlcNAc...) asparagine glycosylation is found at N38, N75, N146, and N258. Cystine bridges form between C120-C184 and C224-C279. The Ig-like domain maps to 185–295; it reads PRYFLSVLDA…LGDQDIVLYW (111 aa). Residues 303 to 323 form a helical membrane-spanning segment; that stretch reads LIFVAIIVSSLILLICLALWF. Residues 324 to 333 lie on the Cytoplasmic side of the membrane; that stretch reads WRRWSYLTIL. Positions 329 to 332 match the Internalization signal motif; the sequence is YLTI.

As to quaternary structure, heterodimer with B2M (beta-2-microglobulin). Interacts with saposin C.

The protein resides in the cell membrane. It localises to the endosome membrane. It is found in the lysosome membrane. Antigen-presenting protein that binds self and non-self lipid and glycolipid antigens and presents them to T-cell receptors on natural killer T-cells. The polypeptide is T-cell surface glycoprotein CD1b-1 (Ovis aries (Sheep)).